Consider the following 62-residue polypeptide: DNA-directed RNA polymerase subunit Rpo10 (62 aa).

The Zn(2+) site is built by Cys-6, Cys-9, Cys-43, and Cys-44.

This sequence belongs to the archaeal Rpo10/eukaryotic RPB10 RNA polymerase subunit family. As to quaternary structure, part of the RNA polymerase complex. The cofactor is Zn(2+).

The protein localises to the cytoplasm. It catalyses the reaction RNA(n) + a ribonucleoside 5'-triphosphate = RNA(n+1) + diphosphate. In terms of biological role, DNA-dependent RNA polymerase (RNAP) catalyzes the transcription of DNA into RNA using the four ribonucleoside triphosphates as substrates. The polypeptide is DNA-directed RNA polymerase subunit Rpo10 (Methanosarcina mazei (strain ATCC BAA-159 / DSM 3647 / Goe1 / Go1 / JCM 11833 / OCM 88) (Methanosarcina frisia)).